The primary structure comprises 283 residues: Protein/nucleic acid deglycase HchA (283 aa).

Residues His-86, Glu-91, and His-123 each contribute to the Zn(2+) site. The active-site Nucleophile is the Cys-185.

The protein belongs to the peptidase C56 family. HchA subfamily. Homodimer.

The protein localises to the cytoplasm. It catalyses the reaction N(omega)-(1-hydroxy-2-oxopropyl)-L-arginyl-[protein] + H2O = lactate + L-arginyl-[protein] + H(+). The catalysed reaction is N(6)-(1-hydroxy-2-oxopropyl)-L-lysyl-[protein] + H2O = lactate + L-lysyl-[protein] + H(+). The enzyme catalyses S-(1-hydroxy-2-oxopropyl)-L-cysteinyl-[protein] + H2O = lactate + L-cysteinyl-[protein] + H(+). It carries out the reaction N(omega)-(1-hydroxy-2-oxoethyl)-L-arginyl-[protein] + H2O = L-arginyl-[protein] + glycolate + H(+). It catalyses the reaction N(6)-(1-hydroxy-2-oxoethyl)-L-lysyl-[protein] + H2O = glycolate + L-lysyl-[protein] + H(+). The catalysed reaction is S-(1-hydroxy-2-oxoethyl)-L-cysteinyl-[protein] + H2O = glycolate + L-cysteinyl-[protein] + H(+). The enzyme catalyses N(2)-(1-hydroxy-2-oxopropyl)-dGTP + H2O = lactate + dGTP + H(+). It carries out the reaction N(2)-(1-hydroxy-2-oxopropyl)-GTP + H2O = lactate + GTP + H(+). It catalyses the reaction N(2)-(1-hydroxy-2-oxopropyl)-GDP + H2O = lactate + GDP + H(+). The catalysed reaction is N(2)-(1-hydroxy-2-oxopropyl)-GMP + H2O = lactate + GMP + H(+). The enzyme catalyses N(2)-(1-hydroxy-2-oxoethyl)-dGTP + H2O = dGTP + glycolate + H(+). It carries out the reaction N(2)-(1-hydroxy-2-oxoethyl)-GTP + H2O = glycolate + GTP + H(+). It catalyses the reaction N(2)-(1-hydroxy-2-oxoethyl)-GDP + H2O = glycolate + GDP + H(+). The catalysed reaction is N(2)-(1-hydroxy-2-oxoethyl)-GMP + H2O = glycolate + GMP + H(+). The enzyme catalyses an N(2)-(1-hydroxy-2-oxopropyl)-guanosine in RNA + H2O = a guanosine in RNA + lactate + H(+). It carries out the reaction an N(2)-(1-hydroxy-2-oxopropyl)-2'-deoxyguanosine in DNA + H2O = a 2'-deoxyguanosine in DNA + lactate + H(+). It catalyses the reaction an N(2)-(1-hydroxy-2-oxoethyl)-guanosine in RNA + H2O = a guanosine in RNA + glycolate + H(+). The catalysed reaction is an N(2)-(1-hydroxy-2-oxoethyl)-2'-deoxyguanosine in DNA + H2O = a 2'-deoxyguanosine in DNA + glycolate + H(+). Its function is as follows. Protein and nucleotide deglycase that catalyzes the deglycation of the Maillard adducts formed between amino groups of proteins or nucleotides and reactive carbonyl groups of glyoxals. Thus, functions as a protein deglycase that repairs methylglyoxal- and glyoxal-glycated proteins, and releases repaired proteins and lactate or glycolate, respectively. Deglycates cysteine, arginine and lysine residues in proteins, and thus reactivates these proteins by reversing glycation by glyoxals. Acts on early glycation intermediates (hemithioacetals and aminocarbinols), preventing the formation of Schiff bases and advanced glycation endproducts (AGE). Also functions as a nucleotide deglycase able to repair glycated guanine in the free nucleotide pool (GTP, GDP, GMP, dGTP) and in DNA and RNA. Is thus involved in a major nucleotide repair system named guanine glycation repair (GG repair), dedicated to reversing methylglyoxal and glyoxal damage via nucleotide sanitization and direct nucleic acid repair. Plays an important role in protecting cells from carbonyl stress. The sequence is that of Protein/nucleic acid deglycase HchA from Escherichia coli O8 (strain IAI1).